The chain runs to 85 residues: Toxin BmKITc (85 aa).

The first 21 residues, 1-21, serve as a signal peptide directing secretion; it reads MKLFLLLVIFASMLNDGLVNA. The region spanning 22–82 is the LCN-type CS-alpha/beta domain; it reads DGYIRGSDGC…KWKYESNTCG (61 aa). 4 disulfides stabilise this stretch: Cys31-Cys81, Cys35-Cys56, Cys42-Cys63, and Cys46-Cys65.

It belongs to the long (4 C-C) scorpion toxin superfamily. Sodium channel inhibitor family. Beta subfamily. Expressed by the venom gland.

Its subcellular location is the secreted. Functionally, depressant insect beta-toxins cause a transient contraction paralysis followed by a slow flaccid paralysis. They bind voltage-independently at site-4 of sodium channels (Nav) and shift the voltage of activation toward more negative potentials thereby affecting sodium channel activation and promoting spontaneous and repetitive firing. This chain is Toxin BmKITc, found in Olivierus martensii (Manchurian scorpion).